The chain runs to 474 residues: MTPTLKQLFEKHNVKGLSNNSKTIKANDAFFAIKNGNDFIADALEKGAALVITDDKKNTTNKVIFVEDIKETLHEAIELFYPKKPKTMIAVTGTNGKSSVVSYIAQIYSLIGQKAASIGTIGVEVFGIDNFNESIGGLTTTDYLSFRKIAHKLAKNGIDYLAFEASSHGLDQQRLGDLKVNVACFTSFSQDHLDYHHTKENYLLAKLKLFTDHLAKDGIAILNSDIEEIKFIKDYLDKHKIKYLCVGANGNCKITKTNSSLKGQNINFIFDNKNYDFDTPIIGSFQASNLLIAGPSVYYTSFDFSKVINALTKVKAVKGRMERVNRTNIFIDYAHTPDALEKALTELKNIKAKGGKLSIIFGCGGNRDTTKRKLMGKIAASIADNVIVTDDNPRHEDPKAIRQEIISGIVTTNYIEIADRKEAIKYGINNLKKDDILLIAGKGHENYQIIGDEKIRFDDAEVASMSFLATAGIQ.

Serine 21 contacts UDP-N-acetyl-alpha-D-muramoyl-L-alanyl-D-glutamate. Position 93 to 99 (93 to 99 (GTNGKSS)) interacts with ATP. UDP-N-acetyl-alpha-D-muramoyl-L-alanyl-D-glutamate-binding positions include 139–140 (TT), serine 166, glutamine 172, and arginine 174. Lysine 206 is subject to N6-carboxylysine. Meso-2,6-diaminopimelate is bound by residues arginine 367, 391–394 (DNPR), glycine 441, and glutamate 445. The Meso-diaminopimelate recognition motif signature appears at 391–394 (DNPR).

This sequence belongs to the MurCDEF family. MurE subfamily. Requires Mg(2+) as cofactor. In terms of processing, carboxylation is probably crucial for Mg(2+) binding and, consequently, for the gamma-phosphate positioning of ATP.

It localises to the cytoplasm. It carries out the reaction UDP-N-acetyl-alpha-D-muramoyl-L-alanyl-D-glutamate + meso-2,6-diaminopimelate + ATP = UDP-N-acetyl-alpha-D-muramoyl-L-alanyl-gamma-D-glutamyl-meso-2,6-diaminopimelate + ADP + phosphate + H(+). The protein operates within cell wall biogenesis; peptidoglycan biosynthesis. Catalyzes the addition of meso-diaminopimelic acid to the nucleotide precursor UDP-N-acetylmuramoyl-L-alanyl-D-glutamate (UMAG) in the biosynthesis of bacterial cell-wall peptidoglycan. The sequence is that of UDP-N-acetylmuramoyl-L-alanyl-D-glutamate--2,6-diaminopimelate ligase from Rickettsia bellii (strain RML369-C).